Here is a 263-residue protein sequence, read N- to C-terminus: Endonuclease 8 (263 aa).

P2 functions as the Schiff-base intermediate with DNA in the catalytic mechanism. The active-site Proton donor is the E3. K53 (proton donor; for beta-elimination activity) is an active-site residue. DNA is bound by residues Q70, R125, and N169. The segment at 229–263 adopts an FPG-type zinc-finger fold; it reads KVFHRDGEACERCGGIIEKTTLSSRPFYWCPHCQK. The active-site Proton donor; for delta-elimination activity is the R253.

It belongs to the FPG family. Zn(2+) is required as a cofactor.

It catalyses the reaction 2'-deoxyribonucleotide-(2'-deoxyribose 5'-phosphate)-2'-deoxyribonucleotide-DNA = a 3'-end 2'-deoxyribonucleotide-(2,3-dehydro-2,3-deoxyribose 5'-phosphate)-DNA + a 5'-end 5'-phospho-2'-deoxyribonucleoside-DNA + H(+). Functionally, involved in base excision repair of DNA damaged by oxidation or by mutagenic agents. Acts as a DNA glycosylase that recognizes and removes damaged bases. Has a preference for oxidized pyrimidines, such as thymine glycol, 5,6-dihydrouracil and 5,6-dihydrothymine. Has AP (apurinic/apyrimidinic) lyase activity and introduces nicks in the DNA strand. Cleaves the DNA backbone by beta-delta elimination to generate a single-strand break at the site of the removed base with both 3'- and 5'-phosphates. The sequence is that of Endonuclease 8 from Salmonella arizonae (strain ATCC BAA-731 / CDC346-86 / RSK2980).